A 1220-amino-acid polypeptide reads, in one-letter code: ATP-dependent helicase/nuclease subunit A (1220 aa).

Residues 9-473 (VIWTDDQWKS…IDLSQNFRSR (465 aa)) enclose the UvrD-like helicase ATP-binding domain. Position 30–37 (30–37 (AAAGSGKT)) interacts with ATP. In terms of domain architecture, UvrD-like helicase C-terminal spans 474–782 (PEVLSTTNYL…RMMTIHASKG (309 aa)).

It belongs to the helicase family. AddA subfamily. Heterodimer of AddA and AddB/RexB. It depends on Mg(2+) as a cofactor.

The enzyme catalyses Couples ATP hydrolysis with the unwinding of duplex DNA by translocating in the 3'-5' direction.. The catalysed reaction is ATP + H2O = ADP + phosphate + H(+). Functionally, the heterodimer acts as both an ATP-dependent DNA helicase and an ATP-dependent, dual-direction single-stranded exonuclease. Recognizes the chi site generating a DNA molecule suitable for the initiation of homologous recombination. The AddA nuclease domain is required for chi fragment generation; this subunit has the helicase and 3' -&gt; 5' nuclease activities. The sequence is that of ATP-dependent helicase/nuclease subunit A from Staphylococcus carnosus (strain TM300).